The following is a 95-amino-acid chain: Aspartyl/glutamyl-tRNA(Asn/Gln) amidotransferase subunit C (95 aa).

Belongs to the GatC family. As to quaternary structure, heterotrimer of A, B and C subunits.

The catalysed reaction is L-glutamyl-tRNA(Gln) + L-glutamine + ATP + H2O = L-glutaminyl-tRNA(Gln) + L-glutamate + ADP + phosphate + H(+). The enzyme catalyses L-aspartyl-tRNA(Asn) + L-glutamine + ATP + H2O = L-asparaginyl-tRNA(Asn) + L-glutamate + ADP + phosphate + 2 H(+). Its function is as follows. Allows the formation of correctly charged Asn-tRNA(Asn) or Gln-tRNA(Gln) through the transamidation of misacylated Asp-tRNA(Asn) or Glu-tRNA(Gln) in organisms which lack either or both of asparaginyl-tRNA or glutaminyl-tRNA synthetases. The reaction takes place in the presence of glutamine and ATP through an activated phospho-Asp-tRNA(Asn) or phospho-Glu-tRNA(Gln). This chain is Aspartyl/glutamyl-tRNA(Asn/Gln) amidotransferase subunit C, found in Methylocella silvestris (strain DSM 15510 / CIP 108128 / LMG 27833 / NCIMB 13906 / BL2).